Reading from the N-terminus, the 151-residue chain is Large ribosomal subunit protein bL9 (151 aa).

The protein belongs to the bacterial ribosomal protein bL9 family.

In terms of biological role, binds to the 23S rRNA. This Dehalococcoides mccartyi (strain ATCC BAA-2100 / JCM 16839 / KCTC 5957 / BAV1) protein is Large ribosomal subunit protein bL9.